The chain runs to 204 residues: Guanylate kinase (204 aa).

One can recognise a Guanylate kinase-like domain in the interval 3-181; sequence GTLYIVSASS…AVSEMSAIFT (179 aa). An ATP-binding site is contributed by 10-17; it reads ASSGTGKS.

It belongs to the guanylate kinase family.

It localises to the cytoplasm. It catalyses the reaction GMP + ATP = GDP + ADP. Essential for recycling GMP and indirectly, cGMP. This chain is Guanylate kinase, found in Xylella fastidiosa (strain Temecula1 / ATCC 700964).